A 425-amino-acid polypeptide reads, in one-letter code: MAKQIQAIRGMNDCLPEQSPVWQKVEQILRQVVASYGYSEVRMPIVEQTHLFKRAIGEVTDVVEKEMYTFEDRNGDSLSLRPEGTASCVRAGIEHGLLYNQERRMWYMGPMFRHERPQKGRYRQFHQFGVELFGINGPDIDAELIMLTHRLWRLFGISEHVTLQLNTLGQSSERAAYRDALVAYLEQYKDQLDEESQRRMYSNPLRVLDSKDEKVQAILVGAPRLFDHLGEESLAHFEGLKRLLESAGIQYEVNERLVRGLDYYNLTVFEWVTNSLGAQGTVCAGGRYDGLVEQLGGQPTPAVGFAMGMERLVLMLETLELNGDIRPAVDVYLAMVGEGTEQAGFQLAERLRDALPDLRLMSHCGGGNFKKQLKRADKSGAAIALILGETEVQNGEITIKYLRGQAEQQTVTVDAAIALLAAKGE.

The protein belongs to the class-II aminoacyl-tRNA synthetase family. Homodimer.

The protein localises to the cytoplasm. The catalysed reaction is tRNA(His) + L-histidine + ATP = L-histidyl-tRNA(His) + AMP + diphosphate + H(+). This is Histidine--tRNA ligase from Aeromonas hydrophila subsp. hydrophila (strain ATCC 7966 / DSM 30187 / BCRC 13018 / CCUG 14551 / JCM 1027 / KCTC 2358 / NCIMB 9240 / NCTC 8049).